The sequence spans 764 residues: Thyrotropin receptor (764 aa).

The first 20 residues, 1–20 (MRPADLLQLVLLLDLPRDLG), serve as a signal peptide directing secretion. Residues 21 to 413 (GMGCSSPPCE…EFNPCEDIMG (393 aa)) are Extracellular-facing. An intrachain disulfide couples Cys31 to Cys41. Residues Asn77, Asn99, and Asn113 are each glycosylated (N-linked (GlcNAc...) asparagine). LRR repeat units lie at residues 100–124 (LSKVTHIEIRNTRNLTYIDPDALKE), 125–150 (LPLLKFLGIFNTGLKMFPDLTKVYST), 152–174 (IFFILEITDNPYMTSIPVNAFQG), 176–199 (CNETLTLKLYNNGFTSVQGYAFNG), 200–223 (TKLDAVYLNKNKYLTVIDKDAFGG), 227–248 (GPSLLDVSQTSVTALPSKGLEH), and 250–271 (KELIARNTWTLKKLPLSLSFLH). Asn177 and Asn198 each carry an N-linked (GlcNAc...) asparagine glycan. A glycan (N-linked (GlcNAc...) asparagine) is linked at Asn302. Tyr385 carries the post-translational modification Sulfotyrosine. The helical transmembrane segment at 414–441 (YKFLRIVVWFVSLLALLGNVFVLLILLT) threads the bilayer. Topologically, residues 442 to 450 (SHYKLNVPR) are cytoplasmic. The chain crosses the membrane as a helical span at residues 451–473 (FLMCNLAFADFCMGMYLLLIASV). At 474 to 494 (DLYTHSEYYNHAIDWQTGPGC) the chain is on the extracellular side. Cysteines 494 and 569 form a disulfide. The chain crosses the membrane as a helical span at residues 495 to 517 (NTAGFFTVFASELSVYTLTVITL). Residues 518–537 (ERWYAITFAMRLDRKIRLRH) are Cytoplasmic-facing. Residues 538 to 560 (ACAIMVGGWVCCFLLALLPLVGI) traverse the membrane as a helical segment. Residues 561–580 (SSYAKVSICLPMDTETPLAL) are Extracellular-facing. A helical membrane pass occupies residues 581-602 (AYIVFVLTLNIVAFVIVCCCYV). The Cytoplasmic portion of the chain corresponds to 603-625 (KIYITVRNPQYNPGDKDTKIAKR). A helical membrane pass occupies residues 626 to 649 (MAVLIFTDFICMAPISFYALSAIL). Topologically, residues 650-660 (NKPLITVSNSK) are extracellular. Residues 661-682 (ILLVLFYPLNSCANPFLYAIFT) form a helical membrane-spanning segment. At 683 to 764 (KAFQRDVFIL…ISEEYMQTVL (82 aa)) the chain is on the cytoplasmic side. Positions 762–764 (TVL) match the PDZ-binding motif.

It belongs to the G-protein coupled receptor 1 family. FSH/LSH/TSH subfamily. As to quaternary structure, interacts with heterodimer GPHA2:GPHB5; this interaction stimulates cAMP production. Interacts (via the PDZ-binding motif) with SCRIB; regulates TSHR trafficking and function. In terms of processing, glycosylated. Sulfated. Sulfation on Tyr-385 plays a role in thyrotropin receptor binding and activation. Expressed in thyroide cells (at protein level). Expressed in the thyroid.

The protein resides in the cell membrane. The protein localises to the basolateral cell membrane. Its function is as follows. Receptor for the thyroid-stimulating hormone (TSH) or thyrotropin. Also acts as a receptor for the heterodimeric glycoprotein hormone (GPHA2:GPHB5) or thyrostimulin. The activity of this receptor is mediated by G proteins which activate adenylate cyclase. Plays a central role in controlling thyroid cell metabolism. In Homo sapiens (Human), this protein is Thyrotropin receptor (TSHR).